A 448-amino-acid polypeptide reads, in one-letter code: Amino-acid acetyltransferase (448 aa).

Positions 295–433 constitute an N-acetyltransferase domain; that stretch reads EQIRRANIND…KQVLYNYQRR (139 aa).

This sequence belongs to the acetyltransferase family. ArgA subfamily. In terms of assembly, homohexamer.

It localises to the cytoplasm. It carries out the reaction L-glutamate + acetyl-CoA = N-acetyl-L-glutamate + CoA + H(+). The protein operates within amino-acid biosynthesis; L-arginine biosynthesis; N(2)-acetyl-L-ornithine from L-glutamate: step 1/4. The polypeptide is Amino-acid acetyltransferase (Photorhabdus laumondii subsp. laumondii (strain DSM 15139 / CIP 105565 / TT01) (Photorhabdus luminescens subsp. laumondii)).